Consider the following 748-residue polypeptide: Catalase-peroxidase (748 aa).

The tryptophyl-tyrosyl-methioninium (Trp-Tyr) (with M-262) cross-link spans 91 to 236 (WHSAGTYRVG…LAAVQMGLIY (146 aa)). Residue His92 is the Proton acceptor of the active site. The tract at residues 201–223 (AQPVADKAGHGKEHGRTDGGRNL) is disordered. Over residues 207–221 (KAGHGKEHGRTDGGR) the composition is skewed to basic and acidic residues. Positions 236–262 (YVNPEGPDGNPDPQASAHDIRETFARM) form a cross-link, tryptophyl-tyrosyl-methioninium (Tyr-Met) (with W-91). His277 is a heme b binding site.

It belongs to the peroxidase family. Peroxidase/catalase subfamily. In terms of assembly, homodimer or homotetramer. Requires heme b as cofactor. Formation of the three residue Trp-Tyr-Met cross-link is important for the catalase, but not the peroxidase activity of the enzyme.

It catalyses the reaction H2O2 + AH2 = A + 2 H2O. The enzyme catalyses 2 H2O2 = O2 + 2 H2O. Functionally, bifunctional enzyme with both catalase and broad-spectrum peroxidase activity. This chain is Catalase-peroxidase, found in Bordetella avium (strain 197N).